Consider the following 497-residue polypeptide: Aspartyl/glutamyl-tRNA(Asn/Gln) amidotransferase subunit B (497 aa).

This sequence belongs to the GatB/GatE family. GatB subfamily. In terms of assembly, heterotrimer of A, B and C subunits.

It carries out the reaction L-glutamyl-tRNA(Gln) + L-glutamine + ATP + H2O = L-glutaminyl-tRNA(Gln) + L-glutamate + ADP + phosphate + H(+). The enzyme catalyses L-aspartyl-tRNA(Asn) + L-glutamine + ATP + H2O = L-asparaginyl-tRNA(Asn) + L-glutamate + ADP + phosphate + 2 H(+). Its function is as follows. Allows the formation of correctly charged Asn-tRNA(Asn) or Gln-tRNA(Gln) through the transamidation of misacylated Asp-tRNA(Asn) or Glu-tRNA(Gln) in organisms which lack either or both of asparaginyl-tRNA or glutaminyl-tRNA synthetases. The reaction takes place in the presence of glutamine and ATP through an activated phospho-Asp-tRNA(Asn) or phospho-Glu-tRNA(Gln). This chain is Aspartyl/glutamyl-tRNA(Asn/Gln) amidotransferase subunit B, found in Cutibacterium acnes (strain DSM 16379 / KPA171202) (Propionibacterium acnes).